Consider the following 514-residue polypeptide: uncharacterized protein (514 aa).

3 disordered regions span residues 1–68 (MSSP…SESE), 109–244 (VPPP…RQAS), and 272–484 (RPAV…AQGC). The span at 368–384 (KPQKPKHSSPGKKPAGR) shows a compositional bias: basic residues. Over residues 385 to 405 (KTRESQAAAREDNDPNRDEVP) the composition is skewed to basic and acidic residues.

This is an uncharacterized protein from Homo sapiens (Human).